A 166-amino-acid chain; its full sequence is Large ribosomal subunit protein eL21 (166 aa).

This sequence belongs to the eukaryotic ribosomal protein eL21 family. In terms of assembly, component of the large ribosomal subunit.

Its subcellular location is the cytoplasm. The protein resides in the cytosol. It localises to the endoplasmic reticulum. Its function is as follows. Component of the large ribosomal subunit. The ribosome is a large ribonucleoprotein complex responsible for the synthesis of proteins in the cell. In Entamoeba histolytica (strain ATCC 30459 / HM-1:IMSS / ABRM), this protein is Large ribosomal subunit protein eL21 (RPL21).